Consider the following 690-residue polypeptide: Protein-glutamine gamma-glutamyltransferase 2 (690 aa).

At A2 the chain carries N-acetylalanine. Intrachain disulfides connect C230/C370 and C370/C371. Residues C277, H335, and D358 contribute to the active site. 5 residues coordinate Ca(2+): N398, D400, E436, E446, and E451. An N6-acetyllysine modification is found at K467. 479–486 (RIRVGQNM) contributes to the GTP binding site. E542 provides a ligand contact to Ca(2+). 583–586 (RDIY) is a GTP binding site. Residue Q636 forms an Isoglutamyl lysine isopeptide (Gln-Lys) (interchain with K-?) linkage.

It belongs to the transglutaminase superfamily. Transglutaminase family. Monomer. Interacts with phospholipase C; promoting alpha-1 adrenergic receptor signaling. Interacts with PLCD1. The cofactor is Ca(2+). Disulfide bond formation inactivates the calcium-dependent acyltransferase activity. Cys-370 can form disulfide bonds with both Cys-230 and Cys-371: formation of a disulfide bond between Cys-230 and Cys-370 facilitates formation of the disulfide between Cys-370 and Cys-371, which promotes inactivation of the acyltransferase activity. May also form interchain disulfids between Cys-230 and Cys-370. Ca(2+) protects against disulfide bond formation and inactivation. Post-translationally, auto-transglutaminated: Forms covalent cross-links mediated by transglutaminase between Gln-636 and the epsilon-amino group of a lysine residue of itself or HMGB1, forming homopolymers and heteropolymers, respectively. In terms of processing, S-nitrosylated, leading to inactivation of the acyltransferase activity.

It localises to the cytoplasm. Its subcellular location is the cytosol. The protein resides in the nucleus. The protein localises to the chromosome. It is found in the secreted. It localises to the extracellular space. Its subcellular location is the extracellular matrix. The protein resides in the cell membrane. The protein localises to the mitochondrion. It catalyses the reaction L-glutaminyl-[protein] + L-lysyl-[protein] = [protein]-L-lysyl-N(6)-5-L-glutamyl-[protein] + NH4(+). It carries out the reaction L-glutaminyl-[protein] + serotonin = 5-serotonyl-L-glutamyl-[protein] + NH4(+). The enzyme catalyses L-glutaminyl-[protein] + dopamine = 5-dopaminyl-L-glutamyl-[protein] + NH4(+). The catalysed reaction is L-glutaminyl-[protein] + histamine = 5-histaminyl-L-glutamyl-[protein] + NH4(+). It catalyses the reaction L-glutaminyl-[protein] + (R)-noradrenaline = 5-(R)-noradrenalinyl-L-glutamyl-[protein] + NH4(+). It carries out the reaction L-glutaminyl-[protein] + H2O = L-glutamyl-[protein] + NH4(+). Its activity is regulated as follows. Acyltransferase activity is regulated by the binding of GTP and Ca(2+): inactivated by GTP, which stabilizes its closed structure, thereby obstructing the accessibility of substrates to the active sites. In contrast, Ca(2+) acts as a cofactor by inducing conformational change to the active open form. In absence of Ca(2+), Mg(2+) may bind Ca(2+)-binding sites, promoting GTP-binding and subsequent inhibition of the acyltransferase activity. Extracellularly reduced and activated by CLIC3. Functionally, calcium-dependent acyltransferase that catalyzes the formation of covalent bonds between peptide-bound glutamine and various primary amines, such as gamma-amino group of peptide-bound lysine, or mono- and polyamines, thereby producing cross-linked or aminated proteins, respectively. Involved in many biological processes, such as bone development, angiogenesis, wound healing, cellular differentiation, chromatin modification and apoptosis. Acts as a protein-glutamine gamma-glutamyltransferase by mediating the cross-linking of proteins, such as ACO2, HSPB6, FN1, HMGB1, RAP1GDS1, SLC25A4/ANT1, SPP1 and WDR54. Under physiological conditions, the protein cross-linking activity is inhibited by GTP; inhibition is relieved by Ca(2+) in response to various stresses. When secreted, catalyzes cross-linking of proteins of the extracellular matrix, such as FN1 and SPP1 resulting in the formation of scaffolds. Plays a key role during apoptosis, both by (1) promoting the cross-linking of cytoskeletal proteins resulting in condensation of the cytoplasm, and by (2) mediating cross-linking proteins of the extracellular matrix, resulting in the irreversible formation of scaffolds that stabilize the integrity of the dying cells before their clearance by phagocytosis, thereby preventing the leakage of harmful intracellular components. In addition to protein cross-linking, can use different monoamine substrates to catalyze a vast array of protein post-translational modifications: mediates aminylation of serotonin, dopamine, noradrenaline or histamine into glutamine residues of target proteins to generate protein serotonylation, dopaminylation, noradrenalinylation or histaminylation, respectively. Mediates protein serotonylation of small GTPases during activation and aggregation of platelets, leading to constitutive activation of these GTPases. Plays a key role in chromatin organization by mediating serotonylation and dopaminylation of histone H3. Catalyzes serotonylation of 'Gln-5' of histone H3 (H3Q5ser) during serotonergic neuron differentiation, thereby facilitating transcription. Acts as a mediator of neurotransmission-independent role of nuclear dopamine in ventral tegmental area (VTA) neurons: catalyzes dopaminylation of 'Gln-5' of histone H3 (H3Q5dop), thereby regulating relapse-related transcriptional plasticity in the reward system. Regulates vein remodeling by mediating serotonylation and subsequent inactivation of ATP2A2/SERCA2. Also acts as a protein deamidase by mediating the side chain deamidation of specific glutamine residues of proteins to glutamate. Catalyzes specific deamidation of protein gliadin, a component of wheat gluten in the diet. May also act as an isopeptidase cleaving the previously formed cross-links. Also able to participate in signaling pathways independently of its acyltransferase activity: acts as a signal transducer in alpha-1 adrenergic receptor-mediated stimulation of phospholipase C-delta (PLCD) activity and is required for coupling alpha-1 adrenergic agonists to the stimulation of phosphoinositide lipid metabolism. This chain is Protein-glutamine gamma-glutamyltransferase 2, found in Cavia cutleri (Guinea pig).